A 124-amino-acid polypeptide reads, in one-letter code: Heat-labile enterotoxin B chain (124 aa).

An N-terminal signal peptide occupies residues 1–21; it reads MNKVKCYVLFTALLSSLCAYG. Cys30 and Cys107 form a disulfide bridge.

In terms of assembly, heterohexamer of one A chain and of five B chains.

In terms of biological role, the biological activity of the toxin is produced by the A chain, which activates intracellular adenyl cyclase. This is Heat-labile enterotoxin B chain (eltB) from Escherichia coli O78:H11 (strain H10407 / ETEC).